Here is a 40-residue protein sequence, read N- to C-terminus: Alpha-conotoxin-like Qc1.1c (40 aa).

A propeptide spanning residues 1 to 19 (SDGRNTAANDKASNLMALR) is cleaved from the precursor. Disulfide bonds link cysteine 22-cysteine 28 and cysteine 23-cysteine 36. The lacks the Ser-Xaa-Pro motif that is crucial for potent interaction with nAChR stretch occupies residues 24 to 26 (PNP).

It belongs to the conotoxin A superfamily. Expressed by the venom duct.

The protein localises to the secreted. Alpha-conotoxins act on postsynaptic membranes, they bind to the nicotinic acetylcholine receptors (nAChR) and thus inhibit them. Has possibly a distinct nAChR binding mode from other alpha-conotoxins, due to a different three residue motif (lacks the Ser-Xaa-Pro motif). The chain is Alpha-conotoxin-like Qc1.1c from Conus quercinus (Oak cone).